The following is a 124-amino-acid chain: uncharacterized protein (124 aa).

Residues 1-22 (MGTSSVLLMIASSLILLEVVMT) form the signal peptide.

This is an uncharacterized protein from Caenorhabditis elegans.